We begin with the raw amino-acid sequence, 76 residues long: Conotoxin Am6.3 (76 aa).

The first 22 residues, 1–22 (MKLTCMMIIAVLFLTAWTFATA), serve as a signal peptide directing secretion. 3 disulfide bridges follow: Cys52–Cys67, Cys59–Cys71, and Cys66–Cys75.

It belongs to the conotoxin O1 superfamily. Post-translationally, is not hydroxylated. In terms of tissue distribution, expressed by the venom duct.

The protein resides in the secreted. Functionally, probable toxin that inhibits ion channels. This chain is Conotoxin Am6.3, found in Conus amadis (Amadis cone).